A 452-amino-acid chain; its full sequence is Bifunctional protein GlmU (452 aa).

The pyrophosphorylase stretch occupies residues Met1 to Arg230. UDP-N-acetyl-alpha-D-glucosamine-binding positions include Leu10–Gly13, Lys24, Gln75, and Gly80–Thr81. Mg(2+) is bound at residue Asp105. UDP-N-acetyl-alpha-D-glucosamine contacts are provided by Gly141, Glu156, Asn171, and Asn228. A Mg(2+)-binding site is contributed by Asn228. The tract at residues Ala231–Asp251 is linker. The tract at residues Gly252 to Thr452 is N-acetyltransferase. Residues Arg317 and Lys335 each coordinate UDP-N-acetyl-alpha-D-glucosamine. His347 acts as the Proton acceptor in catalysis. Residues Tyr350 and Asn361 each coordinate UDP-N-acetyl-alpha-D-glucosamine. Acetyl-CoA is bound by residues Ala364, Asn370–Tyr371, Ser389, Thr407, and Arg424.

It in the N-terminal section; belongs to the N-acetylglucosamine-1-phosphate uridyltransferase family. The protein in the C-terminal section; belongs to the transferase hexapeptide repeat family. In terms of assembly, homotrimer. The cofactor is Mg(2+).

The protein localises to the cytoplasm. It catalyses the reaction alpha-D-glucosamine 1-phosphate + acetyl-CoA = N-acetyl-alpha-D-glucosamine 1-phosphate + CoA + H(+). The enzyme catalyses N-acetyl-alpha-D-glucosamine 1-phosphate + UTP + H(+) = UDP-N-acetyl-alpha-D-glucosamine + diphosphate. It functions in the pathway nucleotide-sugar biosynthesis; UDP-N-acetyl-alpha-D-glucosamine biosynthesis; N-acetyl-alpha-D-glucosamine 1-phosphate from alpha-D-glucosamine 6-phosphate (route II): step 2/2. Its pathway is nucleotide-sugar biosynthesis; UDP-N-acetyl-alpha-D-glucosamine biosynthesis; UDP-N-acetyl-alpha-D-glucosamine from N-acetyl-alpha-D-glucosamine 1-phosphate: step 1/1. It participates in bacterial outer membrane biogenesis; LPS lipid A biosynthesis. Its function is as follows. Catalyzes the last two sequential reactions in the de novo biosynthetic pathway for UDP-N-acetylglucosamine (UDP-GlcNAc). The C-terminal domain catalyzes the transfer of acetyl group from acetyl coenzyme A to glucosamine-1-phosphate (GlcN-1-P) to produce N-acetylglucosamine-1-phosphate (GlcNAc-1-P), which is converted into UDP-GlcNAc by the transfer of uridine 5-monophosphate (from uridine 5-triphosphate), a reaction catalyzed by the N-terminal domain. The protein is Bifunctional protein GlmU of Maricaulis maris (strain MCS10) (Caulobacter maris).